Consider the following 87-residue polypeptide: Small ribosomal subunit protein uS17 (87 aa).

Belongs to the universal ribosomal protein uS17 family. Part of the 30S ribosomal subunit.

Its function is as follows. One of the primary rRNA binding proteins, it binds specifically to the 5'-end of 16S ribosomal RNA. The chain is Small ribosomal subunit protein uS17 from Syntrophobacter fumaroxidans (strain DSM 10017 / MPOB).